A 267-amino-acid polypeptide reads, in one-letter code: Probable 3-methyl-2-oxobutanoate hydroxymethyltransferase (267 aa).

It belongs to the PanB family.

The catalysed reaction is 3-methyl-2-oxobutanoate + (6R)-5,10-methylene-5,6,7,8-tetrahydrofolate + H2O = 2-dehydropantoate + (6S)-5,6,7,8-tetrahydrofolate. It participates in cofactor biosynthesis; (R)-pantothenate biosynthesis; (R)-pantoate from 3-methyl-2-oxobutanoate: step 1/2. The polypeptide is Probable 3-methyl-2-oxobutanoate hydroxymethyltransferase (Schizosaccharomyces pombe (strain 972 / ATCC 24843) (Fission yeast)).